The following is a 150-amino-acid chain: Non-structural protein (150 aa).

The segment at 93 to 140 (PLFRIRFLLLIMSDSISLTDITISPGTLYSARTLLLRAAVLALTRKPM) is apoptotic activity.

Disrupts the host mitochondrial membrane potential and induces apoptosis probably by inducing host CASP8 and CASP9. In Bos taurus (Bovine), this protein is Non-structural protein.